The chain runs to 414 residues: MAFVAPVATVRATTKSSVCQVQGRSTFAQFSGMKKVNQSSRLQPAQSGSAFGGYSDANDAFYTRVSGIVAATFGPTMKVRVAINGFGRIGRNFIRCWAGRSDSNMEVVCINDTSGVKTASHLLKYDSILGTFDADVSAGEDTISVNGKTIKIVSNRNPLQLPWKEMNIDIVVEATGVFVDAPGAGKHIEAGAKKVLITAPGKGDGIGTFVVGVNEKDYSHDKYDIVSNASCTTNCMAPFMKVLDDEFGVVRGMMTTTHSYTGDQRLLDAGHRDLRRARSAALNIVPTTTGAAKAVALVVPSLKGKLNGIALRVPTPNVSVCDVVMQVNKKTFKEEVNGALLKASEGAMKGIIKYSDEPLVSCDHRGTDESTIIDSSLTMVMGDDMIKVVAWYDNEWGYSQRVVDLGEVMARQWK.

The N-terminal 76 residues, 1–76 (MAFVAPVATV…GIVAATFGPT (76 aa)), are a transit peptide targeting the chloroplast. NADP(+)-binding positions include 88-89 (RI), Asp-112, and Arg-156. D-glyceraldehyde 3-phosphate is bound by residues 230 to 232 (SCT), Thr-261, Arg-276, 289 to 290 (TG), and Arg-312. Cys-231 acts as the Nucleophile in catalysis. Position 394 (Asn-394) interacts with NADP(+).

This sequence belongs to the glyceraldehyde-3-phosphate dehydrogenase family. Homotetramer.

It localises to the plastid. The protein localises to the chloroplast. The enzyme catalyses D-glyceraldehyde 3-phosphate + phosphate + NADP(+) = (2R)-3-phospho-glyceroyl phosphate + NADPH + H(+). The protein operates within carbohydrate biosynthesis; Calvin cycle. This is Glyceraldehyde-3-phosphate dehydrogenase, chloroplastic (GAPA) from Chondrus crispus (Carrageen Irish moss).